The chain runs to 308 residues: Isoflavone reductase homolog (308 aa).

NADP(+) contacts are provided by residues 11 to 17 (GGTGYIG), Arg36, and Lys45. Lys133 (proton acceptor) is an active-site residue. Residue Arg137 participates in NADP(+) binding.

It belongs to the NmrA-type oxidoreductase family. Isoflavone reductase subfamily.

It is found in the cytoplasm. This chain is Isoflavone reductase homolog, found in Solanum tuberosum (Potato).